A 505-amino-acid chain; its full sequence is 4-alpha-glucanotransferase (505 aa).

It belongs to the disproportionating enzyme family.

The protein localises to the cytoplasm. It catalyses the reaction Transfers a segment of a (1-&gt;4)-alpha-D-glucan to a new position in an acceptor, which may be glucose or a (1-&gt;4)-alpha-D-glucan.. This Synechocystis sp. (strain ATCC 27184 / PCC 6803 / Kazusa) protein is 4-alpha-glucanotransferase (malQ).